The following is a 200-amino-acid chain: NADH-quinone oxidoreductase subunit C (200 aa).

This sequence belongs to the complex I 30 kDa subunit family. NDH-1 is composed of 14 different subunits. Subunits NuoB, C, D, E, F, and G constitute the peripheral sector of the complex.

Its subcellular location is the cell inner membrane. It catalyses the reaction a quinone + NADH + 5 H(+)(in) = a quinol + NAD(+) + 4 H(+)(out). Its function is as follows. NDH-1 shuttles electrons from NADH, via FMN and iron-sulfur (Fe-S) centers, to quinones in the respiratory chain. The immediate electron acceptor for the enzyme in this species is believed to be ubiquinone. Couples the redox reaction to proton translocation (for every two electrons transferred, four hydrogen ions are translocated across the cytoplasmic membrane), and thus conserves the redox energy in a proton gradient. The sequence is that of NADH-quinone oxidoreductase subunit C from Burkholderia vietnamiensis (strain G4 / LMG 22486) (Burkholderia cepacia (strain R1808)).